Consider the following 1396-residue polypeptide: DNA-directed RNA polymerase subunit beta' (1396 aa).

Cys72, Cys74, Cys87, and Cys90 together coordinate Zn(2+). Mg(2+) contacts are provided by Asp463, Asp465, and Asp467. Zn(2+)-binding residues include Cys814, Cys889, Cys896, and Cys899.

It belongs to the RNA polymerase beta' chain family. As to quaternary structure, the RNAP catalytic core consists of 2 alpha, 1 beta, 1 beta' and 1 omega subunit. When a sigma factor is associated with the core the holoenzyme is formed, which can initiate transcription. Mg(2+) serves as cofactor. Requires Zn(2+) as cofactor.

It carries out the reaction RNA(n) + a ribonucleoside 5'-triphosphate = RNA(n+1) + diphosphate. Functionally, DNA-dependent RNA polymerase catalyzes the transcription of DNA into RNA using the four ribonucleoside triphosphates as substrates. The chain is DNA-directed RNA polymerase subunit beta' from Chlamydia trachomatis serovar L2b (strain UCH-1/proctitis).